The sequence spans 325 residues: MSLLRSLRVFLVARTGSYPAGSLLRQSPQPRHTFYAGPRLSASASSKELLMKLRRKTGYSFVNCKKALETCGGDLKQAEIWLHKEAQKEGWSKAAKLQGRKTKEGLIGLLQEGNTTVLVEVNCETDFVSRNLKFQLLVQQVALGTMMHCQTLKDQPSAYSKGFLNSSELSGLPAGPDREGSLKDQLALAIGKLGENMILKRAAWVKVPSGFYVGSYVHGAMQSPSLHKLVLGKYGALVICETSEQKTNLEDVGRRLGQHVVGMAPLSVGSLDDEPGGEAETKMLSQPYLLDPSITLGQYVQPQGVSVVDFVRFECGEGEEAAETE.

The N-terminal 45 residues, 1–45 (MSLLRSLRVFLVARTGSYPAGSLLRQSPQPRHTFYAGPRLSASAS), are a transit peptide targeting the mitochondrion. Residues lysine 76, lysine 133, and lysine 192 each carry the N6-succinyllysine modification. The residue at position 270 (serine 270) is a Phosphoserine. At threonine 324 the chain carries Phosphothreonine.

Belongs to the EF-Ts family. In terms of tissue distribution, expressed in all tissues, with the highest levels of expression in skeletal muscle, liver and kidney.

Its subcellular location is the mitochondrion. Functionally, associates with the EF-Tu.GDP complex and induces the exchange of GDP to GTP. It remains bound to the aminoacyl-tRNA.EF-Tu.GTP complex up to the GTP hydrolysis stage on the ribosome. This Homo sapiens (Human) protein is Elongation factor Ts, mitochondrial.